The chain runs to 830 residues: Beta-glucosidase A (830 aa).

D769 is an active-site residue.

Belongs to the glycosyl hydrolase 3 family.

The enzyme catalyses Hydrolysis of terminal, non-reducing beta-D-glucosyl residues with release of beta-D-glucose.. Functionally, b.fibrisolvens beta-glucosidase hydrolyzes cellobiose to a limited extent, cellotriose to cellobiose and glucose, and cellotetraose and cellopentaose to predominantly glucose. This Butyrivibrio fibrisolvens protein is Beta-glucosidase A (bglA).